Consider the following 341-residue polypeptide: Tetraacyldisaccharide 4'-kinase (341 aa).

An ATP-binding site is contributed by 54–61 (TVGGAGKT).

Belongs to the LpxK family.

The catalysed reaction is a lipid A disaccharide + ATP = a lipid IVA + ADP + H(+). It functions in the pathway glycolipid biosynthesis; lipid IV(A) biosynthesis; lipid IV(A) from (3R)-3-hydroxytetradecanoyl-[acyl-carrier-protein] and UDP-N-acetyl-alpha-D-glucosamine: step 6/6. Transfers the gamma-phosphate of ATP to the 4'-position of a tetraacyldisaccharide 1-phosphate intermediate (termed DS-1-P) to form tetraacyldisaccharide 1,4'-bis-phosphate (lipid IVA). In Brucella melitensis biotype 2 (strain ATCC 23457), this protein is Tetraacyldisaccharide 4'-kinase.